The following is a 255-amino-acid chain: Imidazole glycerol phosphate synthase subunit HisF (255 aa).

Catalysis depends on residues aspartate 11 and aspartate 130.

This sequence belongs to the HisA/HisF family. Heterodimer of HisH and HisF.

Its subcellular location is the cytoplasm. The enzyme catalyses 5-[(5-phospho-1-deoxy-D-ribulos-1-ylimino)methylamino]-1-(5-phospho-beta-D-ribosyl)imidazole-4-carboxamide + L-glutamine = D-erythro-1-(imidazol-4-yl)glycerol 3-phosphate + 5-amino-1-(5-phospho-beta-D-ribosyl)imidazole-4-carboxamide + L-glutamate + H(+). Its pathway is amino-acid biosynthesis; L-histidine biosynthesis; L-histidine from 5-phospho-alpha-D-ribose 1-diphosphate: step 5/9. Functionally, IGPS catalyzes the conversion of PRFAR and glutamine to IGP, AICAR and glutamate. The HisF subunit catalyzes the cyclization activity that produces IGP and AICAR from PRFAR using the ammonia provided by the HisH subunit. This chain is Imidazole glycerol phosphate synthase subunit HisF, found in Campylobacter jejuni subsp. jejuni serotype O:6 (strain 81116 / NCTC 11828).